Reading from the N-terminus, the 201-residue chain is Putative manganese efflux pump MntP (201 aa).

5 helical membrane-spanning segments follow: residues 6–26 (CLAV…ATGI), 39–59 (LAFH…TLGL), 105–125 (LTLI…GLSL), 127–147 (VLGI…LLFT), and 169–189 (LAGG…HGVF).

The protein belongs to the MntP (TC 9.B.29) family.

Its subcellular location is the cell inner membrane. Probably functions as a manganese efflux pump. The protein is Putative manganese efflux pump MntP of Nitratidesulfovibrio vulgaris (strain ATCC 29579 / DSM 644 / CCUG 34227 / NCIMB 8303 / VKM B-1760 / Hildenborough) (Desulfovibrio vulgaris).